We begin with the raw amino-acid sequence, 300 residues long: Ribonuclease HIII (300 aa).

Residues 83–300 (IPIIGSDEVG…THKAQALLTK (218 aa)) enclose the RNase H type-2 domain. Residues Asp89, Glu90, and Asp194 each coordinate a divalent metal cation.

This sequence belongs to the RNase HII family. RnhC subfamily. It depends on Mn(2+) as a cofactor. Requires Mg(2+) as cofactor.

The protein resides in the cytoplasm. The catalysed reaction is Endonucleolytic cleavage to 5'-phosphomonoester.. Endonuclease that specifically degrades the RNA of RNA-DNA hybrids. This is Ribonuclease HIII from Streptococcus pyogenes serotype M3 (strain ATCC BAA-595 / MGAS315).